A 296-amino-acid polypeptide reads, in one-letter code: MASFLRFRLSASLKPYITFGRMLYTRIDKDGLTMLAGHLAYVSLLSLVPLVTVIFALFAAFPMFADISIKLKAFIFTNFMPATGDIIQNYLEQFVANSNRMTVVGTCGLIVTALLLIYSVDSVLNIIWRSKVHRSLVFSFAVYWMVLTLGPILVGASMVISSYLLSLQWLANARVDSMIDETLRLFPLLISWVSFWLLYSVVPTVRVPAQDALIGALVAALFFELGKKGFTMYITLFPSYQLIYGVLAVIPILFLWVYWSWCIVLLGAEITVTLGEYRAQRHQAITEKSPSQSQEI.

A run of 7 helical transmembrane segments spans residues 44-64 (LLSLVPLVTVIFALFAAFPMF), 67-87 (ISIKLKAFIFTNFMPATGDII), 108-128 (GLIVTALLLIYSVDSVLNIIW), 136-156 (LVFSFAVYWMVLTLGPILVGA), 185-205 (LFPLLISWVSFWLLYSVVPTV), 212-232 (ALIGALVAALFFELGKKGFTM), and 246-266 (VLAVIPILFLWVYWSWCIVLL).

The protein belongs to the UPF0761 family.

It localises to the cell inner membrane. This chain is UPF0761 membrane protein YE0031, found in Yersinia enterocolitica serotype O:8 / biotype 1B (strain NCTC 13174 / 8081).